Reading from the N-terminus, the 697-residue chain is Glycine--tRNA ligase beta subunit (697 aa).

It belongs to the class-II aminoacyl-tRNA synthetase family. Tetramer of two alpha and two beta subunits.

The protein localises to the cytoplasm. It catalyses the reaction tRNA(Gly) + glycine + ATP = glycyl-tRNA(Gly) + AMP + diphosphate. This Ralstonia nicotianae (strain ATCC BAA-1114 / GMI1000) (Ralstonia solanacearum) protein is Glycine--tRNA ligase beta subunit.